A 251-amino-acid chain; its full sequence is Pyrroline-5-carboxylate reductase (251 aa).

The protein belongs to the pyrroline-5-carboxylate reductase family.

The protein localises to the cytoplasm. It catalyses the reaction L-proline + NADP(+) = (S)-1-pyrroline-5-carboxylate + NADPH + 2 H(+). The enzyme catalyses L-proline + NAD(+) = (S)-1-pyrroline-5-carboxylate + NADH + 2 H(+). The protein operates within amino-acid biosynthesis; L-proline biosynthesis; L-proline from L-glutamate 5-semialdehyde: step 1/1. Catalyzes the reduction of 1-pyrroline-5-carboxylate (PCA) to L-proline. This chain is Pyrroline-5-carboxylate reductase (proC), found in Methanobrevibacter smithii.